The following is a 145-amino-acid chain: Large ribosomal subunit protein bL35c (145 aa).

The transit peptide at 1–56 (MASLSMASVNVSFCHPLRSSSPKVSLRSSVHFATSLSSSHSISGLRAVLPLKISTV) directs the protein to the chloroplast.

This sequence belongs to the bacterial ribosomal protein bL35 family. Part of the 50S ribosomal subunit.

It is found in the plastid. The protein localises to the chloroplast. The polypeptide is Large ribosomal subunit protein bL35c (Arabidopsis thaliana (Mouse-ear cress)).